Here is a 239-residue protein sequence, read N- to C-terminus: Succinate dehydrogenase [ubiquinone] iron-sulfur subunit (239 aa).

The 2Fe-2S ferredoxin-type domain occupies 11-100; sequence FKVYRWNPDK…EMKIYPLPHM (90 aa). [2Fe-2S] cluster-binding residues include Cys-61, Cys-66, Cys-69, and Cys-81. Positions 141-171 constitute a 4Fe-4S ferredoxin-type domain; it reads DREKLDGLYECVLCACCSTSCPSYWWNSDKY. Residues Cys-151, Cys-154, and Cys-157 each contribute to the [4Fe-4S] cluster site. A [3Fe-4S] cluster-binding site is contributed by Cys-161. Trp-166 is a binding site for a ubiquinone. Residues Cys-208 and Cys-214 each coordinate [3Fe-4S] cluster. Position 218 (Cys-218) interacts with [4Fe-4S] cluster.

It belongs to the succinate dehydrogenase/fumarate reductase iron-sulfur protein family. Component of complex II composed of four subunits: a flavoprotein (FP), an iron-sulfur protein (IP), and a cytochrome b composed of a large and a small subunit. It depends on [2Fe-2S] cluster as a cofactor. [3Fe-4S] cluster serves as cofactor. [4Fe-4S] cluster is required as a cofactor.

The protein localises to the mitochondrion inner membrane. The enzyme catalyses a quinone + succinate = fumarate + a quinol. It functions in the pathway carbohydrate metabolism; tricarboxylic acid cycle; fumarate from succinate (eukaryal route): step 1/1. Functionally, iron-sulfur protein (IP) subunit of succinate dehydrogenase (SDH) that is involved in complex II of the mitochondrial electron transport chain and is responsible for transferring electrons from succinate to ubiquinone (coenzyme Q). This chain is Succinate dehydrogenase [ubiquinone] iron-sulfur subunit (SDH2), found in Reclinomonas americana.